A 70-amino-acid chain; its full sequence is ATP synthase subunit c (70 aa).

2 consecutive transmembrane segments (helical) span residues 4–24 and 47–67; these read IAAGIAMFGAAIGGGIGDGIV and FIGVGLVEAMPILAFVISLLV.

It belongs to the ATPase C chain family. In terms of assembly, F-type ATPases have 2 components, F(1) - the catalytic core - and F(0) - the membrane proton channel. F(1) has five subunits: alpha(3), beta(3), gamma(1), delta(1), epsilon(1). F(0) has three main subunits: a(1), b(2) and c(10-14). The alpha and beta chains form an alternating ring which encloses part of the gamma chain. F(1) is attached to F(0) by a central stalk formed by the gamma and epsilon chains, while a peripheral stalk is formed by the delta and b chains.

It localises to the cell membrane. Its function is as follows. F(1)F(0) ATP synthase produces ATP from ADP in the presence of a proton or sodium gradient. F-type ATPases consist of two structural domains, F(1) containing the extramembraneous catalytic core and F(0) containing the membrane proton channel, linked together by a central stalk and a peripheral stalk. During catalysis, ATP synthesis in the catalytic domain of F(1) is coupled via a rotary mechanism of the central stalk subunits to proton translocation. In terms of biological role, key component of the F(0) channel; it plays a direct role in translocation across the membrane. A homomeric c-ring of between 10-14 subunits forms the central stalk rotor element with the F(1) delta and epsilon subunits. The chain is ATP synthase subunit c from Pediococcus pentosaceus (strain ATCC 25745 / CCUG 21536 / LMG 10740 / 183-1w).